A 54-amino-acid polypeptide reads, in one-letter code: UPF0391 membrane protein BMEI0373 (54 aa).

2 helical membrane passes run 5–25 and 29–48; these read VLVF…GIAG and GIAQ…SLIA.

It belongs to the UPF0391 family.

It is found in the cell membrane. This chain is UPF0391 membrane protein BMEI0373, found in Brucella melitensis biotype 1 (strain ATCC 23456 / CCUG 17765 / NCTC 10094 / 16M).